Here is a 501-residue protein sequence, read N- to C-terminus: Glycerol kinase (501 aa).

Residue T11 participates in ADP binding. The ATP site is built by T11, T12, and S13. Residue T11 coordinates sn-glycerol 3-phosphate. R15 contributes to the ADP binding site. Positions 81, 82, 133, and 242 each coordinate sn-glycerol 3-phosphate. The glycerol site is built by R81, E82, Y133, D242, and Q243. Residues T264 and G307 each contribute to the ADP site. ATP is bound by residues T264, G307, Q311, and G409. ADP is bound by residues G409 and N413.

Belongs to the FGGY kinase family.

The enzyme catalyses glycerol + ATP = sn-glycerol 3-phosphate + ADP + H(+). It functions in the pathway polyol metabolism; glycerol degradation via glycerol kinase pathway; sn-glycerol 3-phosphate from glycerol: step 1/1. Inhibited by fructose 1,6-bisphosphate (FBP). Key enzyme in the regulation of glycerol uptake and metabolism. Catalyzes the phosphorylation of glycerol to yield sn-glycerol 3-phosphate. The polypeptide is Glycerol kinase (Borreliella burgdorferi (strain ATCC 35210 / DSM 4680 / CIP 102532 / B31) (Borrelia burgdorferi)).